The primary structure comprises 477 residues: Exodeoxyribonuclease 7 large subunit (477 aa).

The interval lysine 452–glycine 477 is disordered.

Belongs to the XseA family. Heterooligomer composed of large and small subunits.

It localises to the cytoplasm. It carries out the reaction Exonucleolytic cleavage in either 5'- to 3'- or 3'- to 5'-direction to yield nucleoside 5'-phosphates.. Bidirectionally degrades single-stranded DNA into large acid-insoluble oligonucleotides, which are then degraded further into small acid-soluble oligonucleotides. In Erythrobacter litoralis (strain HTCC2594), this protein is Exodeoxyribonuclease 7 large subunit.